A 515-amino-acid polypeptide reads, in one-letter code: Arabinose import ATP-binding protein AraG 2 (515 aa).

The disordered stretch occupies residues 1–22 (MTMQTMTAASGHDAEAGTPPDG). 2 consecutive ABC transporter domains span residues 25–260 (LALD…MVGR) and 260–511 (RSIE…LIKL). An ATP-binding site is contributed by 57–64 (GENGAGKS).

Belongs to the ABC transporter superfamily. Arabinose importer (TC 3.A.1.2.2) family. As to quaternary structure, the complex is composed of two ATP-binding proteins (AraG), two transmembrane proteins (AraH) and a solute-binding protein (AraF).

It localises to the cell inner membrane. It carries out the reaction L-arabinose(out) + ATP + H2O = L-arabinose(in) + ADP + phosphate + H(+). In terms of biological role, part of the ABC transporter complex AraFGH involved in arabinose import. Responsible for energy coupling to the transport system. This Burkholderia cenocepacia (strain HI2424) protein is Arabinose import ATP-binding protein AraG 2.